The sequence spans 360 residues: Peptide chain release factor 1 (360 aa).

Q235 carries the post-translational modification N5-methylglutamine.

Belongs to the prokaryotic/mitochondrial release factor family. In terms of processing, methylated by PrmC. Methylation increases the termination efficiency of RF1.

Its subcellular location is the cytoplasm. Peptide chain release factor 1 directs the termination of translation in response to the peptide chain termination codons UAG and UAA. This Delftia acidovorans (strain DSM 14801 / SPH-1) protein is Peptide chain release factor 1.